Reading from the N-terminus, the 206-residue chain is MKGILGVKVGMTRIFRDDRAVPVTVILAGPCPVVQRRTPEKDGYTAVQLGFLPQNPKRVNRPLKGHFAKAGVEPVRILREIRDFNPEGDTVTVEIFKPGERVDVTGTSKGRGFAGVMKRWNFAGGPDSHGAHKIHRHPGSIGNRKTPGRVYKGKKMAGHYGAERVTVMNLEVVDVIPEENLLLVKGAVPGPNGGLVIVRETKKAAK.

The protein belongs to the universal ribosomal protein uL3 family. As to quaternary structure, part of the 50S ribosomal subunit. Forms a cluster with proteins L14 and L19.

One of the primary rRNA binding proteins, it binds directly near the 3'-end of the 23S rRNA, where it nucleates assembly of the 50S subunit. The protein is Large ribosomal subunit protein uL3 of Thermus thermophilus (strain ATCC BAA-163 / DSM 7039 / HB27).